The primary structure comprises 278 residues: Protoheme IX farnesyltransferase 1 (278 aa).

A run of 9 helical transmembrane segments spans residues valine 12–aspartate 32, leucine 35–tyrosine 55, leucine 76–leucine 96, phenylalanine 98–valine 118, tryptophan 129–leucine 149, alanine 158–phenylalanine 178, glutamate 199–leucine 221, glycine 226–valine 248, and methionine 255–leucine 275.

The protein belongs to the UbiA prenyltransferase family. Protoheme IX farnesyltransferase subfamily.

It localises to the cell membrane. It catalyses the reaction heme b + (2E,6E)-farnesyl diphosphate + H2O = Fe(II)-heme o + diphosphate. The protein operates within porphyrin-containing compound metabolism; heme O biosynthesis; heme O from protoheme: step 1/1. Its function is as follows. Converts heme B (protoheme IX) to heme O by substitution of the vinyl group on carbon 2 of heme B porphyrin ring with a hydroxyethyl farnesyl side group. The protein is Protoheme IX farnesyltransferase 1 of Pyrobaculum aerophilum (strain ATCC 51768 / DSM 7523 / JCM 9630 / CIP 104966 / NBRC 100827 / IM2).